Consider the following 219-residue polypeptide: Formate dehydrogenase 2 subunit beta (cytochrome c-553) (219 aa).

Positions 3–32 (KAFLIDTTRCTACRGCQLACKEWHDLPANV) constitute a 4Fe-4S ferredoxin-type 1 domain. [4Fe-4S] cluster-binding residues include C12, C15, C18, C22, C74, C77, C82, C124, C141, C144, C156, and C160. The 40-residue stretch at 132 to 171 (DPKTKRITKCDMCFDRVSAGMQPICVKTCPTGTMAFGERD) folds into the 4Fe-4S ferredoxin-type 2 domain.

Heterotrimer of cytochrome c3 FDH2C and formate dehydrogenase FDH2 alpha and beta subunits that forms the FdhABC(3) complex. The cofactor is [4Fe-4S] cluster.

It is found in the periplasm. Its function is as follows. Beta chain of the formate dehydrogenase (FDH) that catalyzes the reversible two-electron oxidation of formate to carbon dioxide. The beta chain is an electron transfer unit. The protein is Formate dehydrogenase 2 subunit beta (cytochrome c-553) of Nitratidesulfovibrio vulgaris (strain ATCC 29579 / DSM 644 / CCUG 34227 / NCIMB 8303 / VKM B-1760 / Hildenborough) (Desulfovibrio vulgaris).